A 540-amino-acid chain; its full sequence is GMP synthase [glutamine-hydrolyzing] (540 aa).

The Glutamine amidotransferase type-1 domain occupies 26 to 216 (LIIILDFGSQ…VYHICDCEPT (191 aa)). The Nucleophile role is filled by Cys-103. Residues His-190 and Glu-192 contribute to the active site. Residues 217–415 (WTTAAFVEEA…IGLPEEIVQR (199 aa)) enclose the GMPS ATP-PPase domain. Position 244 to 250 (244 to 250 (SGGVDSS)) interacts with ATP.

As to quaternary structure, homodimer.

The catalysed reaction is XMP + L-glutamine + ATP + H2O = GMP + L-glutamate + AMP + diphosphate + 2 H(+). It functions in the pathway purine metabolism; GMP biosynthesis; GMP from XMP (L-Gln route): step 1/1. Catalyzes the synthesis of GMP from XMP. This Nostoc punctiforme (strain ATCC 29133 / PCC 73102) protein is GMP synthase [glutamine-hydrolyzing].